A 569-amino-acid polypeptide reads, in one-letter code: Dolichol kinase EVAN (569 aa).

Residues 1-22 (MKTTATSFVTGERVVVFVVVSR) lie on the Cytoplasmic side of the membrane. Residues 23–43 (ILLSLPLSLISHGFSLFLLSL) traverse the membrane as a helical segment. Topologically, residues 44–67 (SAFLVEIRVETSPFLLSHFSSRRG) are lumenal. The helical transmembrane segment at 68 to 88 (ASSGILLGAVTLPSVMISKLV) threads the bilayer. The Cytoplasmic portion of the chain corresponds to 89–108 (QLSRAISIHEAEQDELAHVT). The helical transmembrane segment at 109 to 129 (MQYWAASASCCAILIYLSVIM) threads the bilayer. The Lumenal segment spans residues 130–147 (SQVRKDESLSSSSIWLTR). The chain crosses the membrane as a helical span at residues 148–168 (VSLTGTVLYGVACFVSLSMIS). At 169 to 178 (HTGLNTSLKM) the chain is on the cytoplasmic side. A helical transmembrane segment spans residues 179-199 (LWMLFHGLAAVKLIRHLLCTF). Over 200-207 (PSCASIGE) the chain is Lumenal. A helical transmembrane segment spans residues 208–228 (ALLVTSGLVLYFGDFLACTIA). Over 229–252 (KIFEKLIPVDLVSISYGIKRTETG) the chain is Cytoplasmic. Residues 253 to 273 (IIVQGLLLGLLLFPMVFRFVL) form a helical membrane-spanning segment. At 274 to 296 (HIYESSLRKRDARQRNCSDAAKS) the chain is on the lumenal side. N-linked (GlcNAc...) asparagine glycosylation occurs at Asn289. The helical transmembrane segment at 297–317 (VLFFVSLLFFMVVAVPSWMQF) threads the bilayer. Topologically, residues 318–340 (VHDFNQHPFLWVLTFVFSEPLKR) are cytoplasmic. Residues 341–361 (LSLCIYWILLIVVSVSRFYNI) traverse the membrane as a helical segment. Topologically, residues 362–369 (SRSSKVER) are lumenal. Residues 370–390 (ILLRKYYHLMAVLMFLPALVL) form a helical membrane-spanning segment. Residues 391 to 393 (QPK) are Cytoplasmic-facing. A helical membrane pass occupies residues 394-414 (FLDLAFGAALAVFVALEIIRI). Topologically, residues 415–440 (WRIQPLGEPLHQFMNAFTDHRDSEHL) are lumenal. The helical transmembrane segment at 441–461 (IVSHFSLLLGCALPIWMSSGF) threads the bilayer. Residues 462 to 464 (NDR) lie on the Cytoplasmic side of the membrane. A helical transmembrane segment spans residues 465–485 (ALSPFAGILSLGIGDTMASMV). The Lumenal segment spans residues 486–508 (GHKYGVLRWSKTGKKTVEGTAAG). The interval 487–503 (HKYGVLRWSKTGKKTVE) is CTP-binding. A helical membrane pass occupies residues 509–529 (ITSMMAVCFVLVPILASMGYI). At 530–548 (LSQGWWSLLVAVTATGMLE) the chain is on the cytoplasmic side. The helical transmembrane segment at 549–569 (AYTAQLDNAFIPLVFYSLLCL) threads the bilayer.

The protein belongs to the polyprenol kinase family.

The protein localises to the endoplasmic reticulum membrane. It carries out the reaction a di-trans,poly-cis-dolichol + CTP = a di-trans,poly-cis-dolichyl phosphate + CDP + H(+). Essential for pollen development. Involved in protein N-glycosylation in the endoplasmic reticulum (ER), especially in the female gametophyte. Mediates pollen tube (PT) reception in synergids through protein glycosylation. This Arabidopsis thaliana (Mouse-ear cress) protein is Dolichol kinase EVAN.